The primary structure comprises 845 residues: Ribosome-releasing factor 2, mitochondrial (845 aa).

The N-terminal 28 residues, 1–28 (MIIATSLRSQTFCTWRAWRAVHSTAVRL), are a transit peptide targeting the mitochondrion. Residues 38–330 (DRTRNIGIIA…GVVKYLPSPL (293 aa)) enclose the tr-type G domain. GTP contacts are provided by residues 47-54 (AHIDAGKT), 111-115 (DTPGH), and 165-168 (NKMD).

The protein belongs to the TRAFAC class translation factor GTPase superfamily. Classic translation factor GTPase family. EF-G/EF-2 subfamily.

The protein resides in the mitochondrion. Functionally, mitochondrial GTPase that mediates the disassembly of ribosomes from messenger RNA at the termination of mitochondrial protein biosynthesis. Not involved in the GTP-dependent ribosomal translocation step during translation elongation. The chain is Ribosome-releasing factor 2, mitochondrial from Scheffersomyces stipitis (strain ATCC 58785 / CBS 6054 / NBRC 10063 / NRRL Y-11545) (Yeast).